The chain runs to 129 residues: Large ribosomal subunit protein uL22 (129 aa).

Belongs to the universal ribosomal protein uL22 family. In terms of assembly, part of the 50S ribosomal subunit.

Its function is as follows. This protein binds specifically to 23S rRNA; its binding is stimulated by other ribosomal proteins, e.g. L4, L17, and L20. It is important during the early stages of 50S assembly. It makes multiple contacts with different domains of the 23S rRNA in the assembled 50S subunit and ribosome. Functionally, the globular domain of the protein is located near the polypeptide exit tunnel on the outside of the subunit, while an extended beta-hairpin is found that lines the wall of the exit tunnel in the center of the 70S ribosome. The protein is Large ribosomal subunit protein uL22 of Bartonella quintana (strain Toulouse) (Rochalimaea quintana).